The primary structure comprises 237 residues: UDP-Gal:alpha-D-GlcNAc-diphosphoundecaprenol beta-1,4-galactosyltransferase (237 aa).

Catalysis depends on Glu101, which acts as the Nucleophile.

It belongs to the glycosyltransferase 26 family. Requires Mn(2+) as cofactor. It depends on Ni(2+) as a cofactor. Pb(2+) serves as cofactor.

The catalysed reaction is N-acetyl-alpha-D-glucosaminyl-di-trans,octa-cis-undecaprenyl diphosphate + UDP-alpha-D-galactose = beta-D-Gal-(1-&gt;4)-alpha-D-GlcNAc-di-trans,octa-cis-undecaprenyl diphosphate + UDP + H(+). The protein operates within bacterial outer membrane biogenesis; LPS O-antigen biosynthesis. Its function is as follows. Galactosyltransferase that adds one galactose residue in the beta-1-4 linkage to GlcNAc-alpha-pyrophosphate-lipid in the biosynthesis of the O-polysaccharide repeating unit of the O antigen. The protein is UDP-Gal:alpha-D-GlcNAc-diphosphoundecaprenol beta-1,4-galactosyltransferase (wfeD) of Shigella boydii.